Consider the following 166-residue polypeptide: Cyclic pyranopterin monophosphate synthase (166 aa).

Substrate is bound by residues 83–85 and 121–122; these read LCH and ME. Residue Asp136 is part of the active site.

Belongs to the MoaC family. In terms of assembly, homohexamer; trimer of dimers.

It catalyses the reaction (8S)-3',8-cyclo-7,8-dihydroguanosine 5'-triphosphate = cyclic pyranopterin phosphate + diphosphate. It participates in cofactor biosynthesis; molybdopterin biosynthesis. Its function is as follows. Catalyzes the conversion of (8S)-3',8-cyclo-7,8-dihydroguanosine 5'-triphosphate to cyclic pyranopterin monophosphate (cPMP). The protein is Cyclic pyranopterin monophosphate synthase of Trichodesmium erythraeum (strain IMS101).